We begin with the raw amino-acid sequence, 492 residues long: 2-succinylbenzoate--CoA ligase (492 aa).

It belongs to the ATP-dependent AMP-binding enzyme family. MenE subfamily.

It catalyses the reaction 2-succinylbenzoate + ATP + CoA = 2-succinylbenzoyl-CoA + AMP + diphosphate. It functions in the pathway quinol/quinone metabolism; 1,4-dihydroxy-2-naphthoate biosynthesis; 1,4-dihydroxy-2-naphthoate from chorismate: step 5/7. It participates in quinol/quinone metabolism; menaquinone biosynthesis. Converts 2-succinylbenzoate (OSB) to 2-succinylbenzoyl-CoA (OSB-CoA). This Staphylococcus aureus (strain Mu3 / ATCC 700698) protein is 2-succinylbenzoate--CoA ligase.